Reading from the N-terminus, the 475-residue chain is MSYRTRFGKDNSACDSGNAVEGSGSSKGPNEVSNDFDHEIAQLTKHRSRPHQLLSQDMPGKSRLLVSTMKMLVGRESNHSGRGRFSSADGCHVLSRYLPINGPWGVDQSTSPAYVSQFSNDGLFFVAGFQGGHIRIYNVDKGWKVQKDILTKSLRWTITDTSLSPDQRYLVYASMTPIVNIVNVGSSMTESLANVTEIHEGLDFSVGGDEDEFGIFSVRFSTDGRELVAASRDASIYVYDLQANKVNLRIPAHSSDVNTVCFADETGHLIYSGSDDNLCKVWDRRCFNHKGQPAGVLMGHLEGVTFIDSRGDGRYFISNGKDQTTQLWDIRKMSSRAMYSPRLRDHDWDYRWMEYPAHAKTLKHPNDQSLATYRGHGVLRTLIRCYLSPAYSTGQKYIYTGSSDHCVYIYDLVTGAQVARLNHHEGPVRDCSWHPLYPMLVSSSWDGTIARWEFPGDDQVPTLERPRARRKERLL.

The tract at residues 1–34 (MSYRTRFGKDNSACDSGNAVEGSGSSKGPNEVSN) is disordered. Positions 23-33 (SGSSKGPNEVS) are enriched in polar residues. WD repeat units follow at residues 211–240 (DEFG…YVYD), 252–283 (AHSS…KVWD), 299–329 (GHLE…QLWD), 375–411 (GHGV…YIYD), and 423–453 (HHEG…ARWE).

This sequence belongs to the WD repeat LEC14B family.

The protein is LEC14B homolog of Prunus armeniaca (Apricot).